The primary structure comprises 91 residues: Small ribosomal subunit protein bS16c (91 aa).

This sequence belongs to the bacterial ribosomal protein bS16 family.

It localises to the plastid. The protein resides in the chloroplast. The protein is Small ribosomal subunit protein bS16c of Vitis vinifera (Grape).